Reading from the N-terminus, the 725-residue chain is Putative oligopeptide transporter YGL114W (725 aa).

9 helical membrane passes run 28–48, 134–154, 254–274, 353–373, 449–469, 472–492, 564–584, 644–664, and 697–717; these read ATIA…QFGL, FREL…FAVP, IIIL…SYFV, WILW…FIVV, ISGC…LFGI, IPLY…ILGI, FCAQ…MYLC, YGYG…GIFN, and IVFS…NMLF.

Belongs to the oligopeptide OPT transporter family.

It is found in the membrane. This Saccharomyces cerevisiae (strain ATCC 204508 / S288c) (Baker's yeast) protein is Putative oligopeptide transporter YGL114W.